Consider the following 292-residue polypeptide: Altered inheritance of mitochondria protein 36, mitochondrial (292 aa).

The N-terminal 26 residues, 1–26 (MFARLVPRLQPQLLSKRVLTARYPML), are a transit peptide targeting the mitochondrion. Residues 56 to 75 (VIRYLFYMLVASWVAIYFVA) traverse the membrane as a helical segment.

It belongs to the AIM36 family.

Its subcellular location is the mitochondrion membrane. The polypeptide is Altered inheritance of mitochondria protein 36, mitochondrial (AIM36) (Candida albicans (strain SC5314 / ATCC MYA-2876) (Yeast)).